The following is a 615-amino-acid chain: Dihydroxy-acid dehydratase (615 aa).

Mg(2+) is bound at residue Asp81. Cys122 serves as a coordination point for [2Fe-2S] cluster. Mg(2+) contacts are provided by Asp123 and Lys124. Lys124 is subject to N6-carboxylysine. A [2Fe-2S] cluster-binding site is contributed by Cys195. Residue Glu491 participates in Mg(2+) binding. Residue Ser517 is the Proton acceptor of the active site.

It belongs to the IlvD/Edd family. Homodimer. [2Fe-2S] cluster is required as a cofactor. Requires Mg(2+) as cofactor.

The enzyme catalyses (2R)-2,3-dihydroxy-3-methylbutanoate = 3-methyl-2-oxobutanoate + H2O. It carries out the reaction (2R,3R)-2,3-dihydroxy-3-methylpentanoate = (S)-3-methyl-2-oxopentanoate + H2O. The protein operates within amino-acid biosynthesis; L-isoleucine biosynthesis; L-isoleucine from 2-oxobutanoate: step 3/4. Its pathway is amino-acid biosynthesis; L-valine biosynthesis; L-valine from pyruvate: step 3/4. Functionally, functions in the biosynthesis of branched-chain amino acids. Catalyzes the dehydration of (2R,3R)-2,3-dihydroxy-3-methylpentanoate (2,3-dihydroxy-3-methylvalerate) into 2-oxo-3-methylpentanoate (2-oxo-3-methylvalerate) and of (2R)-2,3-dihydroxy-3-methylbutanoate (2,3-dihydroxyisovalerate) into 2-oxo-3-methylbutanoate (2-oxoisovalerate), the penultimate precursor to L-isoleucine and L-valine, respectively. This Novosphingobium aromaticivorans (strain ATCC 700278 / DSM 12444 / CCUG 56034 / CIP 105152 / NBRC 16084 / F199) protein is Dihydroxy-acid dehydratase.